The primary structure comprises 377 residues: Tubulin--tyrosine ligase (377 aa).

One can recognise a TTL domain in the interval 3-370 (TFVVRDENSS…PPDTEQVPQQ (368 aa)).

Belongs to the tubulin--tyrosine ligase family. As to quaternary structure, monomer. Mg(2+) serves as cofactor. It depends on K(+) as a cofactor.

The catalysed reaction is C-terminal L-alpha-aminoacyl-L-glutamyl-L-glutamyl-[tubulin] + L-tyrosine + ATP = C-terminal L-alpha-aminoacyl-L-glutamyl-L-glutamyl-L-tyrosyl-[tubulin] + ADP + phosphate + H(+). In terms of biological role, catalyzes the post-translational addition of a tyrosine to the C-terminal end of detyrosinated alpha-tubulin. In Mus musculus (Mouse), this protein is Tubulin--tyrosine ligase (Ttl).